The chain runs to 438 residues: Putative permease HI_0125 (438 aa).

A run of 13 helical transmembrane segments spans residues 21–41, 51–71, 73–93, 97–117, 137–157, 167–187, 195–215, 238–258, 296–316, 326–346, 347–367, 386–406, and 418–438; these read IIAG…VPNM, SVFI…GLWA, APMA…SLVI, VAIP…TLIS, AGIG…GLVV, LGDF…LIIG, GGIL…DPNV, FMGA…MTAV, LFSG…AAGT, AIVV…AFLV, PGYA…SNVS, FIVL…ALVI, and NVGT…GWAI. Residue 315–322 coordinates ATP; that stretch reads GTAAGGKT.

Belongs to the nucleobase:cation symporter-2 (NCS2) (TC 2.A.40) family. Azg-like subfamily.

It localises to the cell membrane. The sequence is that of Putative permease HI_0125 from Haemophilus influenzae (strain ATCC 51907 / DSM 11121 / KW20 / Rd).